The chain runs to 161 residues: Ribonuclease P protein component (161 aa).

This sequence belongs to the RnpA family. As to quaternary structure, consists of a catalytic RNA component (M1 or rnpB) and a protein subunit.

The enzyme catalyses Endonucleolytic cleavage of RNA, removing 5'-extranucleotides from tRNA precursor.. RNaseP catalyzes the removal of the 5'-leader sequence from pre-tRNA to produce the mature 5'-terminus. It can also cleave other RNA substrates such as 4.5S RNA. The protein component plays an auxiliary but essential role in vivo by binding to the 5'-leader sequence and broadening the substrate specificity of the ribozyme. This chain is Ribonuclease P protein component, found in Helicobacter pylori (strain Shi470).